A 189-amino-acid chain; its full sequence is Probable nicotinate-nucleotide adenylyltransferase (189 aa).

The protein belongs to the NadD family.

It carries out the reaction nicotinate beta-D-ribonucleotide + ATP + H(+) = deamido-NAD(+) + diphosphate. The protein operates within cofactor biosynthesis; NAD(+) biosynthesis; deamido-NAD(+) from nicotinate D-ribonucleotide: step 1/1. Its function is as follows. Catalyzes the reversible adenylation of nicotinate mononucleotide (NaMN) to nicotinic acid adenine dinucleotide (NaAD). The protein is Probable nicotinate-nucleotide adenylyltransferase of Bacillus cereus (strain B4264).